We begin with the raw amino-acid sequence, 330 residues long: ADP-L-glycero-D-manno-heptose-6-epimerase (330 aa).

NADP(+)-binding positions include 11–12, 32–33, lysine 39, lysine 54, 75–79, and asparagine 92; these read FI, DN, and EGACS. Tyrosine 139 (proton acceptor) is an active-site residue. Lysine 143 contributes to the NADP(+) binding site. Asparagine 168 lines the substrate pocket. Residues valine 169 and lysine 177 each coordinate NADP(+). Lysine 177 (proton acceptor) is an active-site residue. Substrate is bound by residues arginine 179, histidine 186, 200 to 203, arginine 213, and tyrosine 292; that span reads FGEY.

It belongs to the NAD(P)-dependent epimerase/dehydratase family. HldD subfamily. In terms of assembly, homopentamer. It depends on NADP(+) as a cofactor.

The enzyme catalyses ADP-D-glycero-beta-D-manno-heptose = ADP-L-glycero-beta-D-manno-heptose. Its pathway is nucleotide-sugar biosynthesis; ADP-L-glycero-beta-D-manno-heptose biosynthesis; ADP-L-glycero-beta-D-manno-heptose from D-glycero-beta-D-manno-heptose 7-phosphate: step 4/4. Catalyzes the interconversion between ADP-D-glycero-beta-D-manno-heptose and ADP-L-glycero-beta-D-manno-heptose via an epimerization at carbon 6 of the heptose. This Burkholderia thailandensis (strain ATCC 700388 / DSM 13276 / CCUG 48851 / CIP 106301 / E264) protein is ADP-L-glycero-D-manno-heptose-6-epimerase.